Reading from the N-terminus, the 385-residue chain is GTPase Obg (385 aa).

The Obg domain maps to 1–159 (MKFVDEATIL…REIQLELMLL (159 aa)). Residues 160-333 (ADVGMLGLPN…LCWDVMAFIN (174 aa)) enclose the OBG-type G domain. Residues 166–173 (GLPNAGKS), 191–195 (FTTLV), 213–216 (DIPG), 283–286 (NKAD), and 314–316 (SAA) contribute to the GTP site. Mg(2+) is bound by residues serine 173 and threonine 193. Over residues 362-379 (QQEEAEETLDDDWDEDGV) the composition is skewed to acidic residues. Residues 362–385 (QQEEAEETLDDDWDEDGVETIYQR) form a disordered region.

Belongs to the TRAFAC class OBG-HflX-like GTPase superfamily. OBG GTPase family. As to quaternary structure, monomer. It depends on Mg(2+) as a cofactor.

It is found in the cytoplasm. Its function is as follows. An essential GTPase which binds GTP, GDP and possibly (p)ppGpp with moderate affinity, with high nucleotide exchange rates and a fairly low GTP hydrolysis rate. Plays a role in control of the cell cycle, stress response, ribosome biogenesis and in those bacteria that undergo differentiation, in morphogenesis control. This is GTPase Obg from Sodalis glossinidius (strain morsitans).